The sequence spans 238 residues: Uridylate kinase (238 aa).

12–15 (KLSG) is an ATP binding site. Gly54 is a binding site for UMP. ATP-binding residues include Gly55 and Arg59. Residues Asp74 and 135–142 (TGNPYFTT) each bind UMP. ATP is bound by residues Thr162, Asn163, Tyr168, and Asp171.

It belongs to the UMP kinase family. Homohexamer.

The protein localises to the cytoplasm. The enzyme catalyses UMP + ATP = UDP + ADP. Its pathway is pyrimidine metabolism; CTP biosynthesis via de novo pathway; UDP from UMP (UMPK route): step 1/1. Inhibited by UTP. In terms of biological role, catalyzes the reversible phosphorylation of UMP to UDP. This Bradyrhizobium sp. (strain BTAi1 / ATCC BAA-1182) protein is Uridylate kinase.